Reading from the N-terminus, the 171-residue chain is Large ribosomal subunit protein uL10 (171 aa).

It belongs to the universal ribosomal protein uL10 family. Part of the ribosomal stalk of the 50S ribosomal subunit. The N-terminus interacts with L11 and the large rRNA to form the base of the stalk. The C-terminus forms an elongated spine to which L12 dimers bind in a sequential fashion forming a multimeric L10(L12)X complex.

Forms part of the ribosomal stalk, playing a central role in the interaction of the ribosome with GTP-bound translation factors. The chain is Large ribosomal subunit protein uL10 from Maricaulis maris (strain MCS10) (Caulobacter maris).